The primary structure comprises 368 residues: 2-oxoglutarate-dependent dioxygenase frbJ (368 aa).

Residues 171–277 (QQHKLKIVKY…RYSIPFFQGV (107 aa)) form the Fe2OG dioxygenase domain. Fe cation contacts are provided by H198, D200, and H256. R268 contributes to the 2-oxoglutarate binding site.

It belongs to the iron/ascorbate-dependent oxidoreductase family.

Its pathway is antifungal biosynthesis. Functionally, 2-oxoglutarate-dependent dioxygenase; part of the gene cluster that mediates the biosynthesis of the antifungal antibiotic FR901469, an inhibitor of beta-1,3-glucansynthase, exerting antifungal activity against the pathogenes Candida albicans and Aspergillus fumigatus. FR901469 is a cyclic depsipeptide containing 12 amino acid residues and a fatty acid chain. The NRPS frbI contains 12 modules responsible for the formation of the depsipeptide backbone which is denoted as Acyl-Thr-Ala-Tyr-Val-4OHPro-Thr-Thr-3OHPro-threo3OHGln-Gly-Thr-Orn-OH (C71H116N14O23). The PKS frbB is probably involved in the production of the hydrocarbon chain, and the acyl-CoA ligase frbC might be involved in the transport of the chain to the peptide ptoduct of frbI. Because FR901469 contains 3 hydroxylated amino acid residues, the 3 oxygenases frbA, frbH, and frbJ might be participating in amino acid hydroxylation. As no thioesterase domains were detected in frbI or frbB, the thioesterases frbD and frbE may instead release and cyclize the products of the NRPS and PKS, respectively. The polypeptide is 2-oxoglutarate-dependent dioxygenase frbJ (Dothideomycetidae sp. (strain 11243) (Fungal sp. (strain No.11243))).